The chain runs to 127 residues: Translation initiation factor 5A (127 aa).

A Hypusine modification is found at Lys-36.

It belongs to the eIF-5A family.

It localises to the cytoplasm. Functionally, functions by promoting the formation of the first peptide bond. The protein is Translation initiation factor 5A (eif5a) of Halobacterium salinarum (strain ATCC 700922 / JCM 11081 / NRC-1) (Halobacterium halobium).